The sequence spans 373 residues: Dual-specificity RNA methyltransferase RlmN (373 aa).

The active-site Proton acceptor is the E94. Positions 100–339 (EDDRATLCVS…VIVRKTRGDD (240 aa)) constitute a Radical SAM core domain. C107 and C344 are oxidised to a cystine. C114, C118, and C121 together coordinate [4Fe-4S] cluster. S-adenosyl-L-methionine is bound by residues 168 to 169 (GE), S200, 222 to 224 (SIH), and N301. C344 acts as the S-methylcysteine intermediate in catalysis.

It belongs to the radical SAM superfamily. RlmN family. It depends on [4Fe-4S] cluster as a cofactor.

The protein localises to the cytoplasm. It carries out the reaction adenosine(2503) in 23S rRNA + 2 reduced [2Fe-2S]-[ferredoxin] + 2 S-adenosyl-L-methionine = 2-methyladenosine(2503) in 23S rRNA + 5'-deoxyadenosine + L-methionine + 2 oxidized [2Fe-2S]-[ferredoxin] + S-adenosyl-L-homocysteine. The catalysed reaction is adenosine(37) in tRNA + 2 reduced [2Fe-2S]-[ferredoxin] + 2 S-adenosyl-L-methionine = 2-methyladenosine(37) in tRNA + 5'-deoxyadenosine + L-methionine + 2 oxidized [2Fe-2S]-[ferredoxin] + S-adenosyl-L-homocysteine. Its function is as follows. Specifically methylates position 2 of adenine 2503 in 23S rRNA and position 2 of adenine 37 in tRNAs. m2A2503 modification seems to play a crucial role in the proofreading step occurring at the peptidyl transferase center and thus would serve to optimize ribosomal fidelity. This Shewanella sp. (strain MR-7) protein is Dual-specificity RNA methyltransferase RlmN.